Consider the following 173-residue polypeptide: Shikimate kinase 2 (173 aa).

Residue 12–17 participates in ATP binding; it reads GCGKTT. 2 residues coordinate Mg(2+): T16 and D32. Residues D34, R58, and G79 each coordinate substrate. Residues 112-126 form an LID domain region; it reads EENPQDNQRPTLTGR. R120 serves as a coordination point for ATP. A substrate-binding site is contributed by R139. Q155 contacts ATP.

Belongs to the shikimate kinase family. AroL subfamily. As to quaternary structure, monomer. Requires Mg(2+) as cofactor.

The protein localises to the cytoplasm. The catalysed reaction is shikimate + ATP = 3-phosphoshikimate + ADP + H(+). It participates in metabolic intermediate biosynthesis; chorismate biosynthesis; chorismate from D-erythrose 4-phosphate and phosphoenolpyruvate: step 5/7. In terms of biological role, catalyzes the specific phosphorylation of the 3-hydroxyl group of shikimic acid using ATP as a cosubstrate. In Pectobacterium atrosepticum (strain SCRI 1043 / ATCC BAA-672) (Erwinia carotovora subsp. atroseptica), this protein is Shikimate kinase 2.